The primary structure comprises 173 residues: Endosomal/vacuolar adapter protein YPT35 (173 aa).

The PX domain maps to glutamate 40–lysine 173.

The protein belongs to the YPT35 family.

The protein localises to the endosome membrane. The protein resides in the vacuole membrane. In terms of biological role, recruits the lipid transfer protein VPS13 to endosomal and vacuolar membranes. In Candida glabrata (strain ATCC 2001 / BCRC 20586 / JCM 3761 / NBRC 0622 / NRRL Y-65 / CBS 138) (Yeast), this protein is Endosomal/vacuolar adapter protein YPT35 (YPT35).